A 130-amino-acid polypeptide reads, in one-letter code: MFANIGWGEMLVLVVVGLVVLGPERLPGAIRWSSGALRQARDYLSGVTSQLRDDMGPEFDDLRGQLGELQKLRGMTPRAALTKHLLDGDDSIFTGNFDKAASATPAVDAVASAQEAPDEPVRPPFDSDAT.

A helical membrane pass occupies residues 2 to 22; sequence FANIGWGEMLVLVVVGLVVLG. Positions 108 to 130 are disordered; sequence DAVASAQEAPDEPVRPPFDSDAT.

This sequence belongs to the TatB family. The Tat system comprises two distinct complexes: a TatABC complex, containing multiple copies of TatA, TatB and TatC subunits, and a separate TatA complex, containing only TatA subunits. Substrates initially bind to the TatABC complex, which probably triggers association of the separate TatA complex to form the active translocon.

The protein resides in the cell membrane. Its function is as follows. Part of the twin-arginine translocation (Tat) system that transports large folded proteins containing a characteristic twin-arginine motif in their signal peptide across membranes. Together with TatC, TatB is part of a receptor directly interacting with Tat signal peptides. TatB may form an oligomeric binding site that transiently accommodates folded Tat precursor proteins before their translocation. The chain is Sec-independent protein translocase protein TatB from Mycobacterium ulcerans (strain Agy99).